We begin with the raw amino-acid sequence, 997 residues long: FIP1[III]-like protein (997 aa).

Disordered regions lie at residues Ile-250–Val-272, Ala-289–Gly-475, Ser-534–Asp-553, and Gln-880–Gln-900. Residues Ser-261 to Val-272 are compositionally biased toward polar residues. Composition is skewed to basic and acidic residues over residues Thr-309 to Ser-323, Ser-334 to Arg-346, Glu-367 to Glu-379, and Arg-388 to Gly-404. The Nuclear localization signal signature appears at Ile-397 to Gly-404. Positions Ser-534–Ser-547 are enriched in polar residues. Residues Glu-930–Lys-963 are a coiled coil.

It belongs to the FIP1 family. In terms of assembly, component of the cleavage and polyadenylation specificity factor (CPSF) complex. Forms a complex with cleavage and polyadenylation specificity factor (CPSF) subunits CLPS5, FIPS5, PAPS4, PCFS1, CSTF64 and CPSF30.

The protein localises to the nucleus. Component of the cleavage and polyadenylation specificity factor (CPSF) complex that plays a key role in pre-mRNA 3'-end formation, recognizing the AAUAAA signal sequence and interacting with poly(A) polymerase and other factors to bring about cleavage and poly(A) addition. FIP1L1 contributes to poly(A) site recognition and stimulates poly(A) addition. Binds to U-rich RNA sequence elements surrounding the poly(A) site. May act to tether poly(A) polymerase to the CPSF complex. The chain is FIP1[III]-like protein from Arabidopsis thaliana (Mouse-ear cress).